A 430-amino-acid polypeptide reads, in one-letter code: Glutamate-1-semialdehyde 2,1-aminomutase (430 aa).

Lysine 267 carries the post-translational modification N6-(pyridoxal phosphate)lysine.

This sequence belongs to the class-III pyridoxal-phosphate-dependent aminotransferase family. HemL subfamily. In terms of assembly, homodimer. The cofactor is pyridoxal 5'-phosphate.

The protein resides in the cytoplasm. It carries out the reaction (S)-4-amino-5-oxopentanoate = 5-aminolevulinate. It participates in porphyrin-containing compound metabolism; protoporphyrin-IX biosynthesis; 5-aminolevulinate from L-glutamyl-tRNA(Glu): step 2/2. The sequence is that of Glutamate-1-semialdehyde 2,1-aminomutase from Desulfotalea psychrophila (strain LSv54 / DSM 12343).